The sequence spans 556 residues: Urocanate hydratase (556 aa).

NAD(+) contacts are provided by residues 52–53, Q130, 176–178, E196, R201, 242–243, 263–267, 273–274, and Y322; these read GG, GMG, NA, QTSAH, and YL. The active site involves C410. An NAD(+)-binding site is contributed by G492.

Belongs to the urocanase family. Requires NAD(+) as cofactor.

It localises to the cytoplasm. The catalysed reaction is 4-imidazolone-5-propanoate = trans-urocanate + H2O. The protein operates within amino-acid degradation; L-histidine degradation into L-glutamate; N-formimidoyl-L-glutamate from L-histidine: step 2/3. In terms of biological role, catalyzes the conversion of urocanate to 4-imidazolone-5-propionate. The protein is Urocanate hydratase of Shewanella sp. (strain MR-7).